The sequence spans 331 residues: Phosphoribosylformylglycinamidine cyclo-ligase (331 aa).

This sequence belongs to the AIR synthase family.

It localises to the cytoplasm. The catalysed reaction is 2-formamido-N(1)-(5-O-phospho-beta-D-ribosyl)acetamidine + ATP = 5-amino-1-(5-phospho-beta-D-ribosyl)imidazole + ADP + phosphate + H(+). It functions in the pathway purine metabolism; IMP biosynthesis via de novo pathway; 5-amino-1-(5-phospho-D-ribosyl)imidazole from N(2)-formyl-N(1)-(5-phospho-D-ribosyl)glycinamide: step 2/2. The sequence is that of Phosphoribosylformylglycinamidine cyclo-ligase from Clostridium botulinum (strain ATCC 19397 / Type A).